Consider the following 185-residue polypeptide: Thiol:disulfide interchange protein DsbE (185 aa).

Residues 1-4 (MKRN) lie on the Cytoplasmic side of the membrane. The chain crosses the membrane as a helical span at residues 5–25 (VLLLPLLIFLLIAAALLWQLA). At 26 to 185 (RNAQGDDPTN…WDRYSREAAQ (160 aa)) the chain is on the periplasmic side. Positions 39–177 (ALTGKPVPAF…WESELKPLWD (139 aa)) constitute a Thioredoxin domain. Cysteines 80 and 83 form a disulfide.

Belongs to the thioredoxin family. DsbE subfamily.

The protein resides in the cell inner membrane. In terms of biological role, involved in disulfide bond formation. Catalyzes a late, reductive step in the assembly of periplasmic c-type cytochromes, probably the reduction of disulfide bonds of the apocytochrome c to allow covalent linkage with the heme. Possible subunit of a heme lyase. The polypeptide is Thiol:disulfide interchange protein DsbE (dsbE1) (Salmonella typhimurium (strain LT2 / SGSC1412 / ATCC 700720)).